The primary structure comprises 360 residues: Phospho-N-acetylmuramoyl-pentapeptide-transferase (360 aa).

The next 10 helical transmembrane spans lie at 25 to 45 (RAIL…PWVI), 73 to 93 (TMGG…WADL), 97 to 117 (YVLA…VDDY), 132 to 152 (WKYF…FVTA), 168 to 188 (VAWQ…VGFS), 199 to 219 (GLAI…AYLV), 236 to 256 (SGEL…FLWF), 263 to 283 (VFMG…IAVI), 288 to 308 (IVFF…ILQV), and 339 to 359 (IVRF…TLKI).

The protein belongs to the glycosyltransferase 4 family. MraY subfamily. It depends on Mg(2+) as a cofactor.

It localises to the cell inner membrane. It catalyses the reaction UDP-N-acetyl-alpha-D-muramoyl-L-alanyl-gamma-D-glutamyl-meso-2,6-diaminopimeloyl-D-alanyl-D-alanine + di-trans,octa-cis-undecaprenyl phosphate = di-trans,octa-cis-undecaprenyl diphospho-N-acetyl-alpha-D-muramoyl-L-alanyl-D-glutamyl-meso-2,6-diaminopimeloyl-D-alanyl-D-alanine + UMP. It functions in the pathway cell wall biogenesis; peptidoglycan biosynthesis. Functionally, catalyzes the initial step of the lipid cycle reactions in the biosynthesis of the cell wall peptidoglycan: transfers peptidoglycan precursor phospho-MurNAc-pentapeptide from UDP-MurNAc-pentapeptide onto the lipid carrier undecaprenyl phosphate, yielding undecaprenyl-pyrophosphoryl-MurNAc-pentapeptide, known as lipid I. This Teredinibacter turnerae (strain ATCC 39867 / T7901) protein is Phospho-N-acetylmuramoyl-pentapeptide-transferase.